A 518-amino-acid polypeptide reads, in one-letter code: uncharacterized protein (518 aa).

14 helical membrane-spanning segments follow: residues tryptophan 13–serine 33, tryptophan 49–glycine 69, cysteine 86–isoleucine 106, leucine 109–threonine 129, leucine 141–leucine 161, tryptophan 169–isoleucine 189, alanine 202–leucine 222, leucine 231–isoleucine 251, leucine 280–valine 300, glycine 312–leucine 332, threonine 341–threonine 361, glutamate 365–leucine 385, isoleucine 410–isoleucine 430, and leucine 493–phenylalanine 513.

It belongs to the major facilitator superfamily. TCR/Tet family.

Its subcellular location is the cell membrane. This is an uncharacterized protein from Bacillus subtilis (strain 168).